Consider the following 207-residue polypeptide: UPF0328 protein ECU02_1590/ECU04_0060/ECU08_2120 (207 aa).

Disordered regions lie at residues 1–154 and 180–207; these read MPRP…HSHT and GRLH…LATL. Basic and acidic residues-rich tracts occupy residues 14–24 and 75–97; these read DHPDFRSESSA and HTEG…ETES. 2 stretches are compositionally biased toward polar residues: residues 98-121 and 133-149; these read PKPQ…SQNT and SRPS…QSPH.

This sequence belongs to the UPF0328 family.

The protein is UPF0328 protein ECU02_1590/ECU04_0060/ECU08_2120 of Encephalitozoon cuniculi (strain GB-M1) (Microsporidian parasite).